Reading from the N-terminus, the 434-residue chain is Tol-Pal system protein TolB (434 aa).

A signal peptide spans 1–21 (MIVRRALALAALALAASPALA). The disordered stretch occupies residues 411-434 (GDRQTPVTSGKTDLAAPAWGPLAP).

The protein belongs to the TolB family. In terms of assembly, the Tol-Pal system is composed of five core proteins: the inner membrane proteins TolA, TolQ and TolR, the periplasmic protein TolB and the outer membrane protein Pal. They form a network linking the inner and outer membranes and the peptidoglycan layer.

Its subcellular location is the periplasm. Part of the Tol-Pal system, which plays a role in outer membrane invagination during cell division and is important for maintaining outer membrane integrity. In Anaeromyxobacter sp. (strain K), this protein is Tol-Pal system protein TolB.